Here is a 364-residue protein sequence, read N- to C-terminus: DNA replication and repair protein RecF (364 aa).

30–37 (GDNGAGKT) lines the ATP pocket.

Belongs to the RecF family.

Its subcellular location is the cytoplasm. In terms of biological role, the RecF protein is involved in DNA metabolism; it is required for DNA replication and normal SOS inducibility. RecF binds preferentially to single-stranded, linear DNA. It also seems to bind ATP. This Stenotrophomonas maltophilia (strain K279a) protein is DNA replication and repair protein RecF.